A 482-amino-acid polypeptide reads, in one-letter code: MGAERLKVIIVGGSIAGLTLAHCLDKAGIDYVVLEKRKEITHQEGASILILPHGGRILDQLGMFHSLSQYTEPLHAAHISYPDGFTHTNRSPQVLTDRFGIPLILVERRNLLKVLYNSLPDQSLVQLGKKVVSLNHHNGQVTVTVDDGNVYEGDLVVGADGVHSRVRDEVWRLSDAIRSGTVKDKEKKSMSIEYACIFGISNGVSGLVAGEQVASLNKGRSFLTFPGRDGRVFWFLMHKLDKNYTYPGAPRWSPEDAERIAARYIDDHIWNGVQFKDIWDKREVCGITNLEENIFQTWHSGRVLCLGDSMHKMAPNTGQGANCAMEDAALLANYLRHYLDGQKTAAKPSQEDLNTLFEKFSRDRINRLQSIYKMSRIVVRLHAGRNLFLRLMGRYYLPNTGDVPANQASKSIASGIYLDYLPLPTYSAPGWQDFAPNSKLFSGSLLLIMSVALLFGVICWAGRDIHPLSMKILALLGNYVSQ.

An N-terminal signal peptide occupies residues 1 to 21 (MGAERLKVIIVGGSIAGLTLA). Residues Glu35 and Arg108 each contribute to the FAD site. Residue Asn243 is glycosylated (N-linked (GlcNAc...) asparagine). The FAD site is built by Asp308 and Ala321. The chain crosses the membrane as a helical span at residues 440–460 (LFSGSLLLIMSVALLFGVICW).

Belongs to the paxM FAD-dependent monooxygenase family. Requires FAD as cofactor.

The protein localises to the membrane. Its pathway is secondary metabolite biosynthesis; terpenoid biosynthesis. In terms of biological role, FAD-dependent monooxygenase; part of the cluster that mediates the biosynthesis of shearones, diterpenoid pyrones (DPs) which are structurally diverse meroterpenoids consisting of a diterpene linked by a pyrone, and which may exhibit a range of bioactivities. Within the pathway, esdpE takes part to the biosynthesis of the molecular scaffold by catalyzing the formation of an (S)-epoxide ring at the terminal olefin of the geranylgeranyl group. The molecular scaffold is commonly biosynthesized by a series of enzymes including the non-reducing polyketide synthase (NR-PKS) esdpA that generates an alpha-pyrone; the prenyltransferase esdpC that attaches a geranylgeranyl pyrophosphate (GGPP) produced by the GGPP synthase (GGPPS) esdpD onto the pyrone unit; the FAD-dependent monooxygenase esdpE that converts an olefin on the diterpene unit into an epoxide; and the terpene cyclase esdpB that catalyzes the cyclization reactions to give the molecular backbone shearone A. In the modification steps, esdpF oxidizes the hydroxy group to a ketone at C-3 and esdpG then attaches hydroxy groups at both C-11 and C-12. After that, esdpI hydroxylates at C-20 and esdpH hydroxylates at C-6'. The ether bridge is generated by nucleophilic attack of the hydroxy group at C-20 to the carbonyl carbon at C-3. EsdpH can also functions prior to esdpI. The different combinations of these modification enzymes lead to the production of diverse shearone derivatives, shearone I being the end product of the pathway. The alpha-ketoglutarate-dependent dioxygenase esdpJ seems not to be involved in this pathway. The chain is FAD-dependent monooxygenase esdpE from Penicillium shearii (Eupenicillium shearii).